A 377-amino-acid polypeptide reads, in one-letter code: Chaperone protein DnaJ (377 aa).

One can recognise a J domain in the interval 5-70; the sequence is DYYQVLGVSR…KKRSAYDQLG (66 aa). The segment at 138–216 adopts a CR-type zinc-finger fold; it reads GVTKIISFKT…CYGEGRYINT (79 aa). Positions 151, 154, 168, 171, 190, 193, 204, and 207 each coordinate Zn(2+). CXXCXGXG motif repeat units follow at residues 151 to 158, 168 to 175, 190 to 197, and 204 to 211; these read CDACAGKG, CPTCRGSG, CQTCRGAG, and CTKCYGEG.

It belongs to the DnaJ family. In terms of assembly, homodimer. The cofactor is Zn(2+).

The protein resides in the cytoplasm. Participates actively in the response to hyperosmotic and heat shock by preventing the aggregation of stress-denatured proteins and by disaggregating proteins, also in an autonomous, DnaK-independent fashion. Unfolded proteins bind initially to DnaJ; upon interaction with the DnaJ-bound protein, DnaK hydrolyzes its bound ATP, resulting in the formation of a stable complex. GrpE releases ADP from DnaK; ATP binding to DnaK triggers the release of the substrate protein, thus completing the reaction cycle. Several rounds of ATP-dependent interactions between DnaJ, DnaK and GrpE are required for fully efficient folding. Also involved, together with DnaK and GrpE, in the DNA replication of plasmids through activation of initiation proteins. This Orientia tsutsugamushi (strain Boryong) (Rickettsia tsutsugamushi) protein is Chaperone protein DnaJ.